We begin with the raw amino-acid sequence, 122 residues long: Large ribosomal subunit protein uL14 (122 aa).

The protein belongs to the universal ribosomal protein uL14 family. As to quaternary structure, part of the 50S ribosomal subunit. Forms a cluster with proteins L3 and L19. In the 70S ribosome, L14 and L19 interact and together make contacts with the 16S rRNA in bridges B5 and B8.

Its function is as follows. Binds to 23S rRNA. Forms part of two intersubunit bridges in the 70S ribosome. The polypeptide is Large ribosomal subunit protein uL14 (Enterococcus faecalis (strain ATCC 700802 / V583)).